The sequence spans 178 residues: MAELTTLARPYAKAAFEHAQAHQQLANWSAMLGLAAAVSQDDTMQRMLKAPRVTSAQKATTFIEVCGEKFDAKAQNFIHVVAENDRLPLLPEIAELFDLYKAEQEKSVDVDVTSAFALNQEQQDKLAKVLSARLGREVRLHAAEDASLIGGVVIRAGDLVIDGSVRGKIAKLAEALKS.

This sequence belongs to the ATPase delta chain family. In terms of assembly, F-type ATPases have 2 components, F(1) - the catalytic core - and F(0) - the membrane proton channel. F(1) has five subunits: alpha(3), beta(3), gamma(1), delta(1), epsilon(1). F(0) has three main subunits: a(1), b(2) and c(10-14). The alpha and beta chains form an alternating ring which encloses part of the gamma chain. F(1) is attached to F(0) by a central stalk formed by the gamma and epsilon chains, while a peripheral stalk is formed by the delta and b chains.

The protein localises to the cell inner membrane. In terms of biological role, f(1)F(0) ATP synthase produces ATP from ADP in the presence of a proton or sodium gradient. F-type ATPases consist of two structural domains, F(1) containing the extramembraneous catalytic core and F(0) containing the membrane proton channel, linked together by a central stalk and a peripheral stalk. During catalysis, ATP synthesis in the catalytic domain of F(1) is coupled via a rotary mechanism of the central stalk subunits to proton translocation. This protein is part of the stalk that links CF(0) to CF(1). It either transmits conformational changes from CF(0) to CF(1) or is implicated in proton conduction. This Pseudomonas syringae pv. tomato (strain ATCC BAA-871 / DC3000) protein is ATP synthase subunit delta.